The following is a 318-amino-acid chain: CRISPR-associated protein Cas7/Csa2 1 (318 aa).

Belongs to the CRISPR-associated protein Cas7/Cst2/DevR family. Subtype I-a/Apern subfamily. Part of the aCascade ribonucleoprotein complex, minimally composed of Csa2 and Cas5a, which binds crRNA. Other possible components of aCascade in strain P1 are Cas6b (SSO1437) and Csa5 (SSO1443), while SSO1399, Cas5b (SSO1400) and SSO1401 have sometimes been seen weakly associated. Csa2 is probably the major RNA-binding subunit. The Csa2-Cas5a-crRNA complex also binds target DNA homologous to crRNA, probably forming an R-loop. Purified aCascade forms a filament about 6 nm in width.

Its function is as follows. CRISPR (clustered regularly interspaced short palindromic repeat) is an adaptive immune system that provides protection against mobile genetic elements (viruses, transposable elements and conjugative plasmids). CRISPR clusters contain spacers, sequences complementary to antecedent mobile elements, and target invading nucleic acids. CRISPR clusters are transcribed and processed into CRISPR RNA (crRNA). This Saccharolobus solfataricus (strain ATCC 35092 / DSM 1617 / JCM 11322 / P2) (Sulfolobus solfataricus) protein is CRISPR-associated protein Cas7/Csa2 1 (cas7a).